We begin with the raw amino-acid sequence, 424 residues long: CinA-like protein (424 aa).

Belongs to the CinA family.

This chain is CinA-like protein, found in Shewanella denitrificans (strain OS217 / ATCC BAA-1090 / DSM 15013).